A 420-amino-acid chain; its full sequence is D-tagatose-1,6-bisphosphate aldolase subunit GatZ (420 aa).

The protein belongs to the GatZ/KbaZ family. GatZ subfamily. Forms a complex with GatY.

It functions in the pathway carbohydrate metabolism; D-tagatose 6-phosphate degradation; D-glyceraldehyde 3-phosphate and glycerone phosphate from D-tagatose 6-phosphate: step 2/2. Its function is as follows. Component of the tagatose-1,6-bisphosphate aldolase GatYZ that is required for full activity and stability of the Y subunit. Could have a chaperone-like function for the proper and stable folding of GatY. When expressed alone, GatZ does not show any aldolase activity. Is involved in the catabolism of galactitol. This Escherichia coli O7:K1 (strain IAI39 / ExPEC) protein is D-tagatose-1,6-bisphosphate aldolase subunit GatZ.